We begin with the raw amino-acid sequence, 228 residues long: UPF0502 protein AZOSEA09860 (228 aa).

It belongs to the UPF0502 family.

The protein is UPF0502 protein AZOSEA09860 of Aromatoleum aromaticum (strain DSM 19018 / LMG 30748 / EbN1) (Azoarcus sp. (strain EbN1)).